The primary structure comprises 208 residues: Small ribosomal subunit protein uS4 (208 aa).

The interval 31–51 (SALDKRAYGPGQHGQRRAKTS) is disordered. Residues 98 to 160 (RRLDNVVYRM…TKSNSQVVRA (63 aa)) form the S4 RNA-binding domain.

This sequence belongs to the universal ribosomal protein uS4 family. As to quaternary structure, part of the 30S ribosomal subunit. Contacts protein S5. The interaction surface between S4 and S5 is involved in control of translational fidelity.

In terms of biological role, one of the primary rRNA binding proteins, it binds directly to 16S rRNA where it nucleates assembly of the body of the 30S subunit. Functionally, with S5 and S12 plays an important role in translational accuracy. The sequence is that of Small ribosomal subunit protein uS4 from Helicobacter pylori (strain ATCC 700392 / 26695) (Campylobacter pylori).